Consider the following 88-residue polypeptide: Sec-independent protein translocase protein TatA (88 aa).

The chain crosses the membrane as a helical span at residues 1–21 (MGGISIWQLLIIALIVVLLFG). Positions 43–88 (MSSEEDKKALEDAEAAKPVQTAQTVQSAQPTQQATEKKPESNKEQA) are disordered. The span at 46–57 (EEDKKALEDAEA) shows a compositional bias: basic and acidic residues. The span at 62-76 (QTAQTVQSAQPTQQA) shows a compositional bias: polar residues. Basic and acidic residues predominate over residues 77 to 88 (TEKKPESNKEQA).

It belongs to the TatA/E family. As to quaternary structure, the Tat system comprises two distinct complexes: a TatABC complex, containing multiple copies of TatA, TatB and TatC subunits, and a separate TatA complex, containing only TatA subunits. Substrates initially bind to the TatABC complex, which probably triggers association of the separate TatA complex to form the active translocon.

Its subcellular location is the cell inner membrane. In terms of biological role, part of the twin-arginine translocation (Tat) system that transports large folded proteins containing a characteristic twin-arginine motif in their signal peptide across membranes. TatA could form the protein-conducting channel of the Tat system. This Shewanella oneidensis (strain ATCC 700550 / JCM 31522 / CIP 106686 / LMG 19005 / NCIMB 14063 / MR-1) protein is Sec-independent protein translocase protein TatA.